Reading from the N-terminus, the 471-residue chain is Cysteine--tRNA ligase (471 aa).

Zn(2+) is bound at residue C30. The 'HIGH' region signature appears at 32 to 42 (PTVYNFAHIGN). Zn(2+) contacts are provided by C212, H237, and E241. Residues 270–274 (KMSKS) carry the 'KMSKS' region motif. K273 serves as a coordination point for ATP.

The protein belongs to the class-I aminoacyl-tRNA synthetase family. Monomer. The cofactor is Zn(2+).

Its subcellular location is the cytoplasm. The catalysed reaction is tRNA(Cys) + L-cysteine + ATP = L-cysteinyl-tRNA(Cys) + AMP + diphosphate. The protein is Cysteine--tRNA ligase of Leptospira interrogans serogroup Icterohaemorrhagiae serovar copenhageni (strain Fiocruz L1-130).